The sequence spans 185 residues: MHDAQIRVAIAGAGGRMGRQLIQAALQMEGVALGAALEREGSSLVGSDAGELAGAGKAGVAVQSSLAAVKDDFDVLIDFTRPEGTLNHLAFCREHGKGMVIGTTGFDDAGKQAIRDAAQDIAIVFAANFSVGVNVLLKLLEKAAKVMGDYTDIEIIEAHHRHKVDAPSGTALAMGEAIAGALNKD.

NAD(+) contacts are provided by residues 12 to 17 (GAGGRM) and glutamate 38. Residue arginine 39 participates in NADP(+) binding. Residues 102–104 (GTT) and 126–129 (AANF) contribute to the NAD(+) site. The active-site Proton donor/acceptor is histidine 159. Residue histidine 160 participates in (S)-2,3,4,5-tetrahydrodipicolinate binding. Residue lysine 163 is the Proton donor of the active site. Residue 169-170 (GT) coordinates (S)-2,3,4,5-tetrahydrodipicolinate.

The protein belongs to the DapB family. As to quaternary structure, homotetramer.

The protein resides in the cytoplasm. The enzyme catalyses (S)-2,3,4,5-tetrahydrodipicolinate + NAD(+) + H2O = (2S,4S)-4-hydroxy-2,3,4,5-tetrahydrodipicolinate + NADH + H(+). The catalysed reaction is (S)-2,3,4,5-tetrahydrodipicolinate + NADP(+) + H2O = (2S,4S)-4-hydroxy-2,3,4,5-tetrahydrodipicolinate + NADPH + H(+). It participates in amino-acid biosynthesis; L-lysine biosynthesis via DAP pathway; (S)-tetrahydrodipicolinate from L-aspartate: step 4/4. Functionally, catalyzes the conversion of 4-hydroxy-tetrahydrodipicolinate (HTPA) to tetrahydrodipicolinate. This is 4-hydroxy-tetrahydrodipicolinate reductase (dapB) from Klebsiella pneumoniae.